We begin with the raw amino-acid sequence, 375 residues long: MAKRDYYEILGVSKTAEEREIKKAYKRLAMKYHPDRNQGDKEAEAKFKEIKEAYEVLTDAQKRAAYDQYGHAAFEQGGMGGGFNGGADFSDIFGDVFGDIFGGGRGRQRAARGADLRYNMDLTLEEAVRGVTKEIRIPTLEECDVCHGSGAKAGTQPQTCPTCHGSGQVQMRQGFFAVQQTCPHCQGRGTLIKDPCHKCHGHGRVEKSKTLSVKIPAGVDTGDRIRLAGEGEAGEHGAPAGDLYVQVQVKQHPIFEREGNNLYCEVPINFAMAALGGEIEVPTLDGRVMLKVPSETQTGKLFRMRGKGVKSVRGGAQGDLLCRVVVETPVGLSEKQKQLLKDLQESFGGPTGEKNSPRSKSFFDGVKKFFDDLTR.

One can recognise a J domain in the interval 5–70 (DYYEILGVSK…QKRAAYDQYG (66 aa)). Residues 130–208 (GVTKEIRIPT…CHGHGRVEKS (79 aa)) form a CR-type zinc finger. Positions 143, 146, 160, 163, 182, 185, 196, and 199 each coordinate Zn(2+). CXXCXGXG motif repeat units follow at residues 143 to 150 (CDVCHGSG), 160 to 167 (CPTCHGSG), 182 to 189 (CPHCQGRG), and 196 to 203 (CHKCHGHG).

Belongs to the DnaJ family. In terms of assembly, homodimer. Zn(2+) is required as a cofactor.

The protein resides in the cytoplasm. Its function is as follows. Participates actively in the response to hyperosmotic and heat shock by preventing the aggregation of stress-denatured proteins and by disaggregating proteins, also in an autonomous, DnaK-independent fashion. Unfolded proteins bind initially to DnaJ; upon interaction with the DnaJ-bound protein, DnaK hydrolyzes its bound ATP, resulting in the formation of a stable complex. GrpE releases ADP from DnaK; ATP binding to DnaK triggers the release of the substrate protein, thus completing the reaction cycle. Several rounds of ATP-dependent interactions between DnaJ, DnaK and GrpE are required for fully efficient folding. Also involved, together with DnaK and GrpE, in the DNA replication of plasmids through activation of initiation proteins. In Salmonella paratyphi A (strain ATCC 9150 / SARB42), this protein is Chaperone protein DnaJ.